The chain runs to 149 residues: Large ribosomal subunit protein eL24B (149 aa).

At serine 50 the chain carries Phosphoserine. The disordered stretch occupies residues 96-149; sequence QRPEVRAAARAAALKQRKDKRAASESEKKAIKAKSAASSARGQAIKNAKVAARR. Basic and acidic residues predominate over residues 116 to 125; sequence RAASESEKKA.

It belongs to the eukaryotic ribosomal protein eL24 family. In terms of assembly, component of the large ribosomal subunit (LSU). Mature yeast ribosomes consist of a small (40S) and a large (60S) subunit. The 40S small subunit contains 1 molecule of ribosomal RNA (18S rRNA) and at least 33 different proteins. The large 60S subunit contains 3 rRNA molecules (25S, 5.8S and 5S rRNA) and at least 46 different proteins.

Its subcellular location is the cytoplasm. Component of the ribosome, a large ribonucleoprotein complex responsible for the synthesis of proteins in the cell. The small ribosomal subunit (SSU) binds messenger RNAs (mRNAs) and translates the encoded message by selecting cognate aminoacyl-transfer RNA (tRNA) molecules. The large subunit (LSU) contains the ribosomal catalytic site termed the peptidyl transferase center (PTC), which catalyzes the formation of peptide bonds, thereby polymerizing the amino acids delivered by tRNAs into a polypeptide chain. The nascent polypeptides leave the ribosome through a tunnel in the LSU and interact with protein factors that function in enzymatic processing, targeting, and the membrane insertion of nascent chains at the exit of the ribosomal tunnel. The chain is Large ribosomal subunit protein eL24B (rpl2402) from Schizosaccharomyces pombe (strain 972 / ATCC 24843) (Fission yeast).